A 463-amino-acid polypeptide reads, in one-letter code: Dipeptidyl peptidase 1 (463 aa).

The first 24 residues, 1 to 24 (MGPWSGSRLVALLLLVYGAGSVRG), serve as a signal peptide directing secretion. N29 and N53 each carry an N-linked (GlcNAc...) asparagine glycan. Disulfide bonds link C30-C118 and C54-C136. The propeptide occupies 135–230 (ACFTGRKTGN…TAEIQKKILH (96 aa)). An N-linked (GlcNAc...) asparagine glycan is attached at N144. 3 disulfide bridges follow: C255–C298, C291–C331, and C321–C337. The active site involves C258. N276 carries N-linked (GlcNAc...) asparagine glycosylation. Positions 302 and 304 each coordinate chloride. Y347 is a chloride binding site. Residues H405 and N427 contribute to the active site.

It belongs to the peptidase C1 family. Tetramer of heterotrimers consisting of exclusion domain, heavy- and light chains. It depends on chloride as a cofactor.

It localises to the lysosome. The catalysed reaction is Release of an N-terminal dipeptide, Xaa-Yaa-|-Zaa-, except when Xaa is Arg or Lys, or Yaa or Zaa is Pro.. In terms of biological role, thiol protease. Has dipeptidylpeptidase activity. Active against a broad range of dipeptide substrates composed of both polar and hydrophobic amino acids. Proline cannot occupy the P1 position and arginine cannot occupy the P2 position of the substrate. Can act as both an exopeptidase and endopeptidase. Activates serine proteases such as elastase, cathepsin G and granzymes A and B. The sequence is that of Dipeptidyl peptidase 1 (CTSC) from Bos taurus (Bovine).